Here is a 906-residue protein sequence, read N- to C-terminus: Probable disease resistance RPP8-like protein 2 (906 aa).

The stretch at 15 to 68 (ELLSRESARLNGIDEQVDGLKRQLGRLQSLLKDADAKKNETERVRNFLEDVKDI) forms a coiled coil. The NB-ARC domain maps to 144–454 (LQERQREIRQ…AEGIITPFHD (311 aa)). 190-197 (GMGGIGKT) lines the ATP pocket. LRR repeat units follow at residues 573–597 (LPLLRVLDLSYVQFEGGKLPSSIGD), 598–621 (LIHLRFLSLYEAGVSHLPSSLGNL), 623–644 (LLLCLNLGVADRLLVHVPNVLK), 646–671 (MQELRYLRLPRSMPAKTKLELGDLVN), 672–696 (LESLTNFSTKHGSVTDLLRMTKLSV), 704–727 (ECTFETLLLSLRELRNLETLSFHD), 740–766 (LLVLDFIHLKDLTLSMHLPRFPDQYRF), 767–790 (PPHLAHIWLIGCRMEEDPMPILEK), 791–818 (LLHLKSVYLSSGAFLGRRMVCSKGGFPQ), and 840–865 (MPCLRTLTIDNCKKLKQLPDGLKYVT).

It belongs to the disease resistance NB-LRR family. RPP8/HRT subfamily.

Functionally, potential disease resistance protein. The polypeptide is Probable disease resistance RPP8-like protein 2 (RPP8L2) (Arabidopsis thaliana (Mouse-ear cress)).